The sequence spans 631 residues: Dolichyl-diphosphooligosaccharide--protein glycosyltransferase subunit 2 (631 aa).

The N-terminal stretch at 1–22 (MAPPGSSAVFLLALTITASTQA) is a signal peptide. Topologically, residues 23–540 (LTPTHYLTKH…REPEKRPPTV (518 aa)) are lumenal. A glycan (N-linked (GlcNAc...) asparagine) is linked at asparagine 106. A Glycyl lysine isopeptide (Lys-Gly) (interchain with G-Cter in ubiquitin) cross-link involves residue lysine 154. The helical transmembrane segment at 541 to 561 (VSNTFTALILSPLLLLFALWI) threads the bilayer. Residues 562-571 (RIGANVSNFT) are Cytoplasmic-facing. A helical transmembrane segment spans residues 572–592 (FAPSTVIFHLGHAAMLGLMYV). Over 593-596 (YWTQ) the chain is Lumenal. The helical transmembrane segment at 597–617 (LNMFQTLKYLAVLGTVTFLAG) threads the bilayer. Topologically, residues 618–631 (NRMLAQQAVKRTAH) are cytoplasmic.

Belongs to the SWP1 family. As to quaternary structure, component of the oligosaccharyltransferase (OST) complex. OST exists in two different complex forms which contain common core subunits RPN1, RPN2, OST48, OST4, DAD1 and TMEM258, either STT3A or STT3B as catalytic subunits, and form-specific accessory subunits. STT3A complex assembly occurs through the formation of 3 subcomplexes. Subcomplex 1 contains RPN1 and TMEM258, subcomplex 2 contains the STT3A-specific subunits STT3A, DC2/OSTC, and KCP2 as well as the core subunit OST4, and subcomplex 3 contains RPN2, DAD1, and OST48. The STT3A complex can form stable complexes with the Sec61 complex or with both the Sec61 and TRAP complexes. Interacts with DDI2. Interacts with TMEM35A/NACHO.

It localises to the endoplasmic reticulum. It is found in the endoplasmic reticulum membrane. It participates in protein modification; protein glycosylation. Subunit of the oligosaccharyl transferase (OST) complex that catalyzes the initial transfer of a defined glycan (Glc(3)Man(9)GlcNAc(2) in eukaryotes) from the lipid carrier dolichol-pyrophosphate to an asparagine residue within an Asn-X-Ser/Thr consensus motif in nascent polypeptide chains, the first step in protein N-glycosylation. N-glycosylation occurs cotranslationally and the complex associates with the Sec61 complex at the channel-forming translocon complex that mediates protein translocation across the endoplasmic reticulum (ER). All subunits are required for a maximal enzyme activity. The chain is Dolichyl-diphosphooligosaccharide--protein glycosyltransferase subunit 2 from Rattus norvegicus (Rat).